The sequence spans 132 residues: Small ribosomal subunit protein uS8c (132 aa).

Belongs to the universal ribosomal protein uS8 family. Part of the 30S ribosomal subunit.

It localises to the plastid. The protein localises to the chloroplast. One of the primary rRNA binding proteins, it binds directly to 16S rRNA central domain where it helps coordinate assembly of the platform of the 30S subunit. This is Small ribosomal subunit protein uS8c (rps8) from Psilotum nudum (Whisk fern).